Reading from the N-terminus, the 673-residue chain is Beta-galactosidase GalA (673 aa).

Arg-105 contributes to the substrate binding site. Cys-109 contacts Zn(2+). Substrate is bound at residue Asn-143. Catalysis depends on Glu-144, which acts as the Proton donor. Zn(2+) is bound by residues Cys-149, Cys-151, and Cys-154. Catalysis depends on Glu-308, which acts as the Nucleophile. Substrate-binding positions include Trp-316 and 356–359 (EKFH).

It belongs to the glycosyl hydrolase 42 family. Homodimer.

It carries out the reaction Hydrolysis of terminal non-reducing beta-D-galactose residues in beta-D-galactosides.. With respect to regulation, inhibited by hydrolysis end products D-galactose and D-glucose. The hydrolysis of o-nitrophenyl-beta-D-galactopyranoside (ONPG) is slightly activated by monovalent ions, Na(+) and K(+). Concentrations of these ions in the range of 1-100 mM exert the stimulating effects. The presence of 1 mM Mn(2+) together with the presence of 10 mM Na(+) slightly stimulates the activity, while presence of 10 mM Mn(2+) inhibits the activity by about 40%. Catalyzes the hydrolysis of lactose to its constituent monosaccharides glucose and galactose. Possesses a low level of transgalactosylation activity for the production of galacto-oligosaccharides (GOS) from lactose. This is Beta-galactosidase GalA from Bacillus licheniformis (strain ATCC 14580 / DSM 13 / JCM 2505 / CCUG 7422 / NBRC 12200 / NCIMB 9375 / NCTC 10341 / NRRL NRS-1264 / Gibson 46).